The chain runs to 318 residues: Ferrochelatase (318 aa).

Residues H194 and E275 each coordinate Fe cation.

It belongs to the ferrochelatase family.

The protein localises to the cytoplasm. It carries out the reaction heme b + 2 H(+) = protoporphyrin IX + Fe(2+). It functions in the pathway porphyrin-containing compound metabolism; protoheme biosynthesis; protoheme from protoporphyrin-IX: step 1/1. Its function is as follows. Catalyzes the ferrous insertion into protoporphyrin IX. In Xanthomonas axonopodis pv. citri (strain 306), this protein is Ferrochelatase.